A 589-amino-acid chain; its full sequence is Cell fusion protein aff-1 (589 aa).

Residues 1–20 form the signal peptide; sequence MRLWQWSIAVAICLVMVTEA. At 21 to 537 the chain is on the extracellular side; sequence RLRRHHRKRR…MAHGGDFTEW (517 aa). 7 N-linked (GlcNAc...) asparagine glycosylation sites follow: Asn58, Asn138, Asn205, Asn335, Asn382, Asn392, and Asn408. Residues 538-558 form a helical membrane-spanning segment; the sequence is LKIGIHIVIAVGLLLLLILLF. The Cytoplasmic segment spans residues 559–589; that stretch reads TKCLVPLACCSLSIPFKNRNKKKKKKNSSDY.

It belongs to the EFF/AFF cell fusogen family. As to expression, expressed in amphid sheath cells.

The protein resides in the cell membrane. Its subcellular location is the apical cell membrane. In terms of biological role, required for cell fusion events during development including the fusion of anchor cells (AC), vulval A and vulval D rings, and late epidermal seam cells. Required for amphid sheath cell fusion induced by entry into dauer stage. The protein is Cell fusion protein aff-1 of Caenorhabditis elegans.